Here is a 391-residue protein sequence, read N- to C-terminus: Superoxide dismutase [Fe] 1, chloroplastic (391 aa).

Residues 1–73 constitute a chloroplast transit peptide; sequence MAFATLVGVG…GESTNSRVLQ (73 aa). Residues 87-119 are compositionally biased toward acidic residues; sequence VNDGIDDETASDAEMDEDAEANGDESSGTDEDA. Residues 87 to 120 form a disordered region; sequence VNDGIDDETASDAEMDEDAEANGDESSGTDEDAS. Positions 148, 202, 301, and 305 each coordinate Fe cation. The tract at residues 370–391 is disordered; it reads MPQQVNGDAREQTSGQEKSLGV. A compositionally biased stretch (polar residues) spans 381–391; it reads QTSGQEKSLGV.

This sequence belongs to the iron/manganese superoxide dismutase family. As to quaternary structure, homodimer. Fe cation serves as cofactor.

Its subcellular location is the plastid. The protein resides in the chloroplast. It carries out the reaction 2 superoxide + 2 H(+) = H2O2 + O2. Functionally, destroys superoxide anion radicals which are normally produced within the cells and which are toxic to biological systems. This is Superoxide dismutase [Fe] 1, chloroplastic from Oryza sativa subsp. japonica (Rice).